The chain runs to 1033 residues: SIT4-associating protein SAP190 (1033 aa).

Disordered stretches follow at residues 32-82 (DQDD…TTES), 147-213 (PEII…QVET), 768-813 (FGND…HDSG), and 828-1033 (ENEE…KEAF). Positions 158-170 (ILIERDRKDKKED) are enriched in basic and acidic residues. Over residues 171-182 (AEEGGDSEETTN) the composition is skewed to acidic residues. Residues 183–195 (DSDHDSGDERSVD) are compositionally biased toward basic and acidic residues. Position 774 is a phosphoserine (S774). Composition is skewed to acidic residues over residues 784-793 (SEDIIGDTEG) and 828-838 (ENEEDYAEYSD). Phosphoserine is present on residues S857, S862, and S892. Basic and acidic residues predominate over residues 858–879 (DDGKSKSAESEFTDKISEHRDG). Over residues 909–924 (SRSQPSDPKLQDQNIF) the composition is skewed to polar residues. A compositionally biased stretch (acidic residues) spans 932–944 (GVGDDDDYMDPND). T990 bears the Phosphothreonine mark. Residue S991 is modified to Phosphoserine. Acidic residues predominate over residues 1000-1018 (ISSDEEDSEDEDEENDMGN).

This sequence belongs to the SAPS family. As to quaternary structure, associates with the SIT4 protein phosphatase catalytic subunit in a cell-cycle-dependent manner. Hyperphosphorylated in the absence of SIT4.

Its subcellular location is the cytoplasm. Its function is as follows. Positive regulator of protein phosphatase SIT4. Involved in the general amino acid control (GAAC) response regulated by TOR. Involved in the dephosphorylation of the elongator complex subunit IKI3. This Saccharomyces cerevisiae (strain AWRI1631) (Baker's yeast) protein is SIT4-associating protein SAP190 (SAP190).